A 969-amino-acid polypeptide reads, in one-letter code: Alanine--tRNA ligase (969 aa).

Residues 1–8 constitute a mitochondrion transit peptide; it reads MIKTLLRR. Histidine 616, histidine 620, cysteine 735, and histidine 739 together coordinate Zn(2+).

Belongs to the class-II aminoacyl-tRNA synthetase family. Monomer. Requires Zn(2+) as cofactor.

The protein localises to the mitochondrion. It is found in the cytoplasm. It catalyses the reaction tRNA(Ala) + L-alanine + ATP = L-alanyl-tRNA(Ala) + AMP + diphosphate. In terms of biological role, catalyzes the attachment of alanine to tRNA(Ala) in a two-step reaction: alanine is first activated by ATP to form Ala-AMP and then transferred to the acceptor end of tRNA(Ala). Also edits incorrectly charged tRNA(Ala) via its editing domain. The sequence is that of Alanine--tRNA ligase from Candida albicans (strain SC5314 / ATCC MYA-2876) (Yeast).